A 181-amino-acid chain; its full sequence is Transcription termination/antitermination protein NusG (181 aa).

Positions 130-161 (PGEMIRVNDGPFADFNGVVEEVDYEKSRLKVS) constitute a KOW domain.

The protein belongs to the NusG family. Monomer. Interacts with the transcription termination factor Rho and with RNA polymerase.

In terms of biological role, participates in transcription elongation, termination and antitermination. In the absence of Rho, increases the rate of transcription elongation by the RNA polymerase (RNAP), probably by partially suppressing pausing. In the presence of Rho, modulates most Rho-dependent termination events by interacting with the RNAP to render the complex more susceptible to the termination activity of Rho. May be required to overcome a kinetic limitation of Rho to function at certain terminators. Also involved in ribosomal RNA transcriptional antitermination. In Buchnera aphidicola subsp. Acyrthosiphon pisum (strain APS) (Acyrthosiphon pisum symbiotic bacterium), this protein is Transcription termination/antitermination protein NusG.